A 60-amino-acid chain; its full sequence is Large ribosomal subunit protein bL32A (60 aa).

Residues 1–19 (MAVPKRRMSRSNTRSRRSQ) show a composition bias toward basic residues. The interval 1-21 (MAVPKRRMSRSNTRSRRSQWK) is disordered.

This sequence belongs to the bacterial ribosomal protein bL32 family.

The chain is Large ribosomal subunit protein bL32A from Nocardia farcinica (strain IFM 10152).